Consider the following 166-residue polypeptide: Ribosome-binding factor A (166 aa).

Positions 119 to 166 are disordered; sequence VQAQAKSGVYAGDEDPYVKPRVIGEDEDEDDEDGDDIDRSAPGYEPAH. Positions 143–154 are enriched in acidic residues; it reads EDEDEDDEDGDD.

The protein belongs to the RbfA family. Monomer. Binds 30S ribosomal subunits, but not 50S ribosomal subunits or 70S ribosomes.

It is found in the cytoplasm. One of several proteins that assist in the late maturation steps of the functional core of the 30S ribosomal subunit. Associates with free 30S ribosomal subunits (but not with 30S subunits that are part of 70S ribosomes or polysomes). Required for efficient processing of 16S rRNA. May interact with the 5'-terminal helix region of 16S rRNA. The chain is Ribosome-binding factor A from Clavibacter michiganensis subsp. michiganensis (strain NCPPB 382).